Here is a 354-residue protein sequence, read N- to C-terminus: Nicotinate-nucleotide--dimethylbenzimidazole phosphoribosyltransferase (354 aa).

Catalysis depends on Glu-319, which acts as the Proton acceptor.

This sequence belongs to the CobT family.

The enzyme catalyses 5,6-dimethylbenzimidazole + nicotinate beta-D-ribonucleotide = alpha-ribazole 5'-phosphate + nicotinate + H(+). It functions in the pathway nucleoside biosynthesis; alpha-ribazole biosynthesis; alpha-ribazole from 5,6-dimethylbenzimidazole: step 1/2. Its function is as follows. Catalyzes the synthesis of alpha-ribazole-5'-phosphate from nicotinate mononucleotide (NAMN) and 5,6-dimethylbenzimidazole (DMB). This is Nicotinate-nucleotide--dimethylbenzimidazole phosphoribosyltransferase from Pelodictyon phaeoclathratiforme (strain DSM 5477 / BU-1).